The following is a 105-amino-acid chain: UPF0145 protein VP1283 (105 aa).

Belongs to the UPF0145 family.

The chain is UPF0145 protein VP1283 from Vibrio parahaemolyticus serotype O3:K6 (strain RIMD 2210633).